A 136-amino-acid polypeptide reads, in one-letter code: Large ribosomal subunit protein uL16 (136 aa).

It belongs to the universal ribosomal protein uL16 family. As to quaternary structure, part of the 50S ribosomal subunit.

Functionally, binds 23S rRNA and is also seen to make contacts with the A and possibly P site tRNAs. This Shewanella loihica (strain ATCC BAA-1088 / PV-4) protein is Large ribosomal subunit protein uL16.